We begin with the raw amino-acid sequence, 242 residues long: Cytochrome c oxidase subunit 2 (242 aa).

The Mitochondrial intermembrane portion of the chain corresponds to 1–30 (MSFYGSRYFGDIVHGELGKDLFRYHGFVMM). A helical transmembrane segment spans residues 31–47 (VAVAVLVFVMYMGCVIL). Topologically, residues 48–66 (FTKFSYRHFLNRQRLEFWW) are mitochondrial matrix. The chain crosses the membrane as a helical span at residues 67-83 (TIVPMLMLVGLWXPSMI). The Mitochondrial intermembrane portion of the chain corresponds to 84 to 242 (NLYYMEEVKR…YFVMWLEALN (159 aa)). Cu cation-binding residues include histidine 176, cysteine 211, glutamate 213, cysteine 215, histidine 219, and methionine 222. Glutamate 213 contacts Mg(2+).

This sequence belongs to the cytochrome c oxidase subunit 2 family. As to quaternary structure, component of the cytochrome c oxidase (complex IV, CIV), a multisubunit enzyme composed of a catalytic core of 3 subunits and several supernumerary subunits. The complex exists as a monomer or a dimer and forms supercomplexes (SCs) in the inner mitochondrial membrane with ubiquinol-cytochrome c oxidoreductase (cytochrome b-c1 complex, complex III, CIII). Cu cation is required as a cofactor.

Its subcellular location is the mitochondrion inner membrane. It carries out the reaction 4 Fe(II)-[cytochrome c] + O2 + 8 H(+)(in) = 4 Fe(III)-[cytochrome c] + 2 H2O + 4 H(+)(out). In terms of biological role, component of the cytochrome c oxidase, the last enzyme in the mitochondrial electron transport chain which drives oxidative phosphorylation. The respiratory chain contains 3 multisubunit complexes succinate dehydrogenase (complex II, CII), ubiquinol-cytochrome c oxidoreductase (cytochrome b-c1 complex, complex III, CIII) and cytochrome c oxidase (complex IV, CIV), that cooperate to transfer electrons derived from NADH and succinate to molecular oxygen, creating an electrochemical gradient over the inner membrane that drives transmembrane transport and the ATP synthase. Cytochrome c oxidase is the component of the respiratory chain that catalyzes the reduction of oxygen to water. Electrons originating from reduced cytochrome c in the intermembrane space (IMS) are transferred via the dinuclear copper A center (CU(A)) of subunit 2 and heme A of subunit 1 to the active site in subunit 1, a binuclear center (BNC) formed by heme A3 and copper B (CU(B)). The BNC reduces molecular oxygen to 2 water molecules using 4 electrons from cytochrome c in the IMS and 4 protons from the mitochondrial matrix. In Mytilus edulis (Blue mussel), this protein is Cytochrome c oxidase subunit 2 (COII).